A 267-amino-acid chain; its full sequence is MTAVGEALRRCRAEGRAALVGYLPACFPDVERGIANLQALLDGGVDILEIGLPYSDPVLDGPVIARAADVALRAGSTTAAVLRTLEAVAASGAAAVIMTYWNPVEQYGVDRFAAAVAAAGGSGLVTPDLLPDEAEAWLAASDAHGLDRIFLVAPSSTDERIALTVRFCRGFVYAASVMGVTGVRERASVQAPELVARVRRYTSLPVGVGLGVGTAEQAAEVAQYADAVIVGSAFVRCVFDAGDDAPAALRKLAADLAAGVRRMPATG.

Catalysis depends on proton acceptor residues glutamate 49 and aspartate 60.

Belongs to the TrpA family. In terms of assembly, tetramer of two alpha and two beta chains.

It carries out the reaction (1S,2R)-1-C-(indol-3-yl)glycerol 3-phosphate + L-serine = D-glyceraldehyde 3-phosphate + L-tryptophan + H2O. Its pathway is amino-acid biosynthesis; L-tryptophan biosynthesis; L-tryptophan from chorismate: step 5/5. The alpha subunit is responsible for the aldol cleavage of indoleglycerol phosphate to indole and glyceraldehyde 3-phosphate. The chain is Tryptophan synthase alpha chain from Acidothermus cellulolyticus (strain ATCC 43068 / DSM 8971 / 11B).